The sequence spans 366 residues: DNA repair protein RAD51 homolog 3 (366 aa).

The tract at residues 1–117 is required for Holliday junction resolution activity; that stretch reads MQRELVSFPL…LMKTTEVCGV (117 aa). Ser11 bears the Phosphoserine mark. The interaction with RAD51B, RAD51D and XRCC3 stretch occupies residues 70 to 127; the sequence is SVAGKKYTALELLEQEHTQGFIITFCSALDNILGGGIPLMKTTEVCGVPGVGKTQLCM. 116 to 123 lines the ATP pocket; it reads GVPGVGKT. A disordered region spans residues 338-366; it reads RDAAVTASSSQTEGSSNLRKRSREPEEGC. Residues 343-354 show a composition bias toward polar residues; it reads TASSSQTEGSSN. The short motif at 356-360 is the Nuclear localization signal element; the sequence is RKRSR.

The protein belongs to the RecA family. RAD51 subfamily. As to quaternary structure, part of the RAD51 paralog protein complexes BCDX2 and CX3; the complexes have a ring-like structure arranged into a flat disc around a central channel. The BCDX2 complex consits of RAD51B, RAD51C, RAD51D and XRCC2; the CX3 complex consists of RAD51C and XRCC3. The BCDX2 subcomplex RAD51B:RAD51C interacts with RAD51. Interacts with SWSAP1; involved in homologous recombination repair. Interacts directly with PALB2 which may serve as a scaffold for a HR complex containing PALB2, BRCA2, RAD51C, RAD51 and XRCC3. Interacts with HELQ.

It is found in the nucleus. The protein resides in the cytoplasm. The protein localises to the perinuclear region. It localises to the mitochondrion. Essential for the homologous recombination (HR) pathway of DNA repair. Involved in the homologous recombination repair (HRR) pathway of double-stranded DNA breaks arising during DNA replication or induced by DNA-damaging agents. Part of the RAD51 paralog protein complexes BCDX2 and CX3 which act at different stages of the BRCA1-BRCA2-dependent HR pathway. Upon DNA damage, BCDX2 seems to act downstream of BRCA2 recruitment and upstream of RAD51 recruitment; CX3 seems to act downstream of RAD51 recruitment; both complexes bind predominantly to the intersection of the four duplex arms of the Holliday junction (HJ) and to junction of replication forks. The BCDX2 complex was originally reported to bind single-stranded DNA, single-stranded gaps in duplex DNA and specifically to nicks in duplex DNA. The BCDX2 subcomplex RAD51B:RAD51C exhibits single-stranded DNA-dependent ATPase activity suggesting an involvement in early stages of the HR pathway. Involved in RAD51 foci formation in response to DNA damage suggesting an involvement in early stages of HR probably in the invasion step. Has an early function in DNA repair in facilitating phosphorylation of the checkpoint kinase CHEK2 and thereby transduction of the damage signal, leading to cell cycle arrest and HR activation. Participates in branch migration and HJ resolution and thus is important for processing HR intermediates late in the DNA repair process; the function may be linked to the CX3 complex. Part of a PALB2-scaffolded HR complex containing BRCA2 and which is thought to play a role in DNA repair by HR. Protects RAD51 from ubiquitin-mediated degradation that is enhanced following DNA damage. Plays a role in regulating mitochondrial DNA copy number under conditions of oxidative stress in the presence of RAD51 and XRCC3. Contributes to DNA cross-link resistance, sister chromatid cohesion and genomic stability. Involved in maintaining centrosome number in mitosis. This chain is DNA repair protein RAD51 homolog 3 (RAD51C), found in Cricetulus griseus (Chinese hamster).